Here is a 323-residue protein sequence, read N- to C-terminus: Pseudouridylate synthase TRUB2, mitochondrial (323 aa).

Residue Asp-98 is the Nucleophile of the active site. Residues 302–323 (SGHQQQLPSAGQPWASRVQAPL) are disordered.

The protein belongs to the pseudouridine synthase TruB family. In terms of assembly, forms a regulatory protein-RNA complex, consisting of RCC1L, NGRN, RPUSD3, RPUSD4, TRUB2, FASTKD2 and 16S mt-rRNA.

The protein localises to the mitochondrion matrix. It catalyses the reaction a uridine in mRNA = a pseudouridine in mRNA. The catalysed reaction is uridine(55) in tRNA = pseudouridine(55) in tRNA. In terms of biological role, minor enzyme contributing to the isomerization of uridine to pseudouridine (pseudouridylation) of specific mitochondrial mRNAs (mt-mRNAs) such as COXI and COXIII mt-mRNAs. As a component of a functional protein-RNA module, consisting of RCC1L, NGRN, RPUSD3, RPUSD4, TRUB2, FASTKD2 and 16S mitochondrial ribosomal RNA (16S mt-rRNA), controls 16S mt-rRNA abundance and is required for intra-mitochondrial translation. Also catalyzes pseudouridylation of some tRNAs, including synthesis of pseudouridine(55) from uracil-55, in the psi GC loop of a subset of tRNAs. The protein is Pseudouridylate synthase TRUB2, mitochondrial of Rattus norvegicus (Rat).